Reading from the N-terminus, the 241-residue chain is ATP synthase subunit a (241 aa).

5 helical membrane-spanning segments follow: residues 30–50, 91–111, 128–148, 193–213, and 214–234; these read GQVF…VVVG, FIGT…LVPW, INTT…AGLS, LVVA…VMFL, and GLFT…YYIG.

This sequence belongs to the ATPase A chain family. In terms of assembly, F-type ATPases have 2 components, CF(1) - the catalytic core - and CF(0) - the membrane proton channel. CF(1) has five subunits: alpha(3), beta(3), gamma(1), delta(1), epsilon(1). CF(0) has four main subunits: a, b, b' and c.

It localises to the cellular thylakoid membrane. Its function is as follows. Key component of the proton channel; it plays a direct role in the translocation of protons across the membrane. This is ATP synthase subunit a from Prochlorococcus marinus (strain MIT 9211).